The sequence spans 226 residues: UPF0111 protein PH0637 (226 aa).

Belongs to the UPF0111 family.

The protein is UPF0111 protein PH0637 of Pyrococcus horikoshii (strain ATCC 700860 / DSM 12428 / JCM 9974 / NBRC 100139 / OT-3).